We begin with the raw amino-acid sequence, 277 residues long: Putative phosphoenolpyruvate synthase regulatory protein (277 aa).

152–159 contacts ADP; the sequence is GVSRCGKT.

It belongs to the pyruvate, phosphate/water dikinase regulatory protein family. PSRP subfamily.

The catalysed reaction is [pyruvate, water dikinase] + ADP = [pyruvate, water dikinase]-phosphate + AMP + H(+). The enzyme catalyses [pyruvate, water dikinase]-phosphate + phosphate + H(+) = [pyruvate, water dikinase] + diphosphate. Bifunctional serine/threonine kinase and phosphorylase involved in the regulation of the phosphoenolpyruvate synthase (PEPS) by catalyzing its phosphorylation/dephosphorylation. The sequence is that of Putative phosphoenolpyruvate synthase regulatory protein from Chromohalobacter salexigens (strain ATCC BAA-138 / DSM 3043 / CIP 106854 / NCIMB 13768 / 1H11).